A 367-amino-acid chain; its full sequence is UDP-N-acetylglucosamine--N-acetylmuramyl-(pentapeptide) pyrophosphoryl-undecaprenol N-acetylglucosamine transferase (367 aa).

UDP-N-acetyl-alpha-D-glucosamine is bound by residues 15–17 (TGG), asparagine 127, arginine 163, serine 191, isoleucine 249, and glutamine 294.

It belongs to the glycosyltransferase 28 family. MurG subfamily.

The protein localises to the cell inner membrane. The catalysed reaction is di-trans,octa-cis-undecaprenyl diphospho-N-acetyl-alpha-D-muramoyl-L-alanyl-D-glutamyl-meso-2,6-diaminopimeloyl-D-alanyl-D-alanine + UDP-N-acetyl-alpha-D-glucosamine = di-trans,octa-cis-undecaprenyl diphospho-[N-acetyl-alpha-D-glucosaminyl-(1-&gt;4)]-N-acetyl-alpha-D-muramoyl-L-alanyl-D-glutamyl-meso-2,6-diaminopimeloyl-D-alanyl-D-alanine + UDP + H(+). It functions in the pathway cell wall biogenesis; peptidoglycan biosynthesis. In terms of biological role, cell wall formation. Catalyzes the transfer of a GlcNAc subunit on undecaprenyl-pyrophosphoryl-MurNAc-pentapeptide (lipid intermediate I) to form undecaprenyl-pyrophosphoryl-MurNAc-(pentapeptide)GlcNAc (lipid intermediate II). The polypeptide is UDP-N-acetylglucosamine--N-acetylmuramyl-(pentapeptide) pyrophosphoryl-undecaprenol N-acetylglucosamine transferase (Burkholderia orbicola (strain MC0-3)).